The following is a 562-amino-acid chain: Glutamyl-tRNA(Gln) amidotransferase subunit B, chloroplastic/mitochondrial (562 aa).

Residues 48–76 (SVASNSKREPRPVKTRVMTQERGSGETQT) are disordered. A compositionally biased stretch (polar residues) spans 64–76 (VMTQERGSGETQT).

The protein belongs to the GatB/GatE family. GatB subfamily. As to quaternary structure, subunit of the heterotrimeric GatCAB amidotransferase (AdT) complex, composed of A, B and C subunits.

The protein localises to the mitochondrion. It is found in the plastid. It localises to the chloroplast. It catalyses the reaction L-glutamyl-tRNA(Gln) + L-glutamine + ATP + H2O = L-glutaminyl-tRNA(Gln) + L-glutamate + ADP + phosphate + H(+). In terms of biological role, allows the formation of correctly charged Gln-tRNA(Gln) through the transamidation of misacylated Glu-tRNA(Gln) in chloroplasts and mitochondria. The reaction takes place in the presence of glutamine and ATP through an activated gamma-phospho-Glu-tRNA(Gln). The polypeptide is Glutamyl-tRNA(Gln) amidotransferase subunit B, chloroplastic/mitochondrial (Physcomitrium patens (Spreading-leaved earth moss)).